Here is a 309-residue protein sequence, read N- to C-terminus: Olfactory receptor 10J5 (309 aa).

At 1–27 (MQRNNFTEVIEFVFLGFSSFGKHQITL) the chain is on the extracellular side. Residues 28–48 (FVVFLTIYILTLAGNIIIVTI) form a helical membrane-spanning segment. Residues 49-57 (THIDHHLHT) are Cytoplasmic-facing. A helical transmembrane segment spans residues 58–78 (PMYFFLSMLASSETVYTLVIV). The Extracellular segment spans residues 79-84 (PRMLSS). The helical transmembrane segment at 85-105 (LIFYNLPISLAGCATQMFFFV) threads the bilayer. Cysteine 97 and cysteine 178 are disulfide-bonded. Over 106–131 (TLATNNCFLLTAMGYDRYVAICNPLR) the chain is Cytoplasmic. A helical membrane pass occupies residues 132–152 (YTIIMSKGMCALLVCGSLGTG). Over 153–203 (LVMAVLHVPAMFHLPFCGTVVEHFFCDIYPVMKLSCVDTTVNEIINYGVSS) the chain is Extracellular. The helical transmembrane segment at 204-224 (FVILVPIGLIFISYVLIVSSI) threads the bilayer. Topologically, residues 225 to 235 (LKIVSTEGQKK) are cytoplasmic. A helical membrane pass occupies residues 236–256 (AFATCASHLTVVIVHYGCASI). At 257 to 270 (AYLKPKSESSVEKD) the chain is on the extracellular side. Residues 271–291 (LLLSVTYTIITPLLNPVVYSL) traverse the membrane as a helical segment. Topologically, residues 292–309 (RNKEVKDALCRAVGRNTS) are cytoplasmic.

Belongs to the G-protein coupled receptor 1 family. Expressed in the olfactory epithelium as well as in the testis. Expressed in round spermatids during stages VI-VIII of spermatogenesis.

Its subcellular location is the cell membrane. Functionally, olfactory receptor. Activated by the synthetic floral odorant, lyral, and by alpha-cedrene, a sesquiterpene constituent of cedarwood oil. Its activation increases intracellular Ca(2+). Acts as a key regulator of myogenesis through its actions on cell migration and adhesion by activating the Ca(2+)-dependent AKT signal transduction pathway. Also acts as a regulator of angiogenesis. Moreover, plays a role in the regulation of lipid accumulation in hepatocytes via the cAMP-PKA pathway. Involved in sperm chemotaxis and motility. This Mus musculus (Mouse) protein is Olfactory receptor 10J5.